Here is a 212-residue protein sequence, read N- to C-terminus: Probable GTP-binding protein EngB (212 aa).

The EngB-type G domain maps to S38–P210. Residues G46–S53, G73–Q77, D91–G94, T158–D161, and V189–N191 each bind GTP. Mg(2+)-binding residues include S53 and T75.

Belongs to the TRAFAC class TrmE-Era-EngA-EngB-Septin-like GTPase superfamily. EngB GTPase family. Requires Mg(2+) as cofactor.

In terms of biological role, necessary for normal cell division and for the maintenance of normal septation. In Rickettsia africae (strain ESF-5), this protein is Probable GTP-binding protein EngB.